The following is a 224-amino-acid chain: Ankyrin repeat domain-containing protein 45 (224 aa).

ANK repeat units lie at residues 46 to 76 (VGRNALFAACMMGRSAIVRELVQNGAADVNE) and 80 to 109 (RGYSPLHCSAMWGQLDTLKTLVELNADFQA).

In terms of tissue distribution, widely expressed.

The protein resides in the cytoplasm. The protein localises to the midbody. It localises to the midbody ring. Its subcellular location is the cleavage furrow. Its function is as follows. May play a role during cell division. This chain is Ankyrin repeat domain-containing protein 45, found in Danio rerio (Zebrafish).